We begin with the raw amino-acid sequence, 966 residues long: Alanine--tRNA ligase (966 aa).

4 residues coordinate Zn(2+): His646, His650, Cys750, and His754. The tract at residues 927–949 (DRLGGGGGGRPSLASAGGRDPEA) is disordered.

The protein belongs to the class-II aminoacyl-tRNA synthetase family. Zn(2+) serves as cofactor.

It localises to the cytoplasm. The catalysed reaction is tRNA(Ala) + L-alanine + ATP = L-alanyl-tRNA(Ala) + AMP + diphosphate. Catalyzes the attachment of alanine to tRNA(Ala) in a two-step reaction: alanine is first activated by ATP to form Ala-AMP and then transferred to the acceptor end of tRNA(Ala). Also edits incorrectly charged Ser-tRNA(Ala) and Gly-tRNA(Ala) via its editing domain. This Salinibacter ruber (strain DSM 13855 / M31) protein is Alanine--tRNA ligase.